The primary structure comprises 604 residues: Testis-expressed protein 13C-1 (604 aa).

Disordered regions lie at residues 314 to 337 (EGEG…SHKD), 374 to 397 (PVMP…RPKI), 485 to 523 (CLNA…HPRK), and 538 to 580 (ATKQ…SANC). Positions 322–333 (QGTSLHGDSSNN) are enriched in polar residues. The span at 544–572 (KQPEGIKSLESKQPQETKSSESKQQEKPL) shows a compositional bias: basic and acidic residues.

The protein belongs to the TEX13 family.

Plays a role in transcriptional repression. This Mus musculus (Mouse) protein is Testis-expressed protein 13C-1.